The sequence spans 128 residues: Insoluble matrix shell protein 3 (128 aa).

The signal sequence occupies residues 1–19 (MLMLLCIIATVIPFSLVEG).

As to expression, component of the acid-insoluble organic matrix of the calcified shell.

It localises to the secreted. This is Insoluble matrix shell protein 3 from Ruditapes philippinarum (Japanese carpet shell).